Reading from the N-terminus, the 104-residue chain is Replication restart protein PriB (104 aa).

In terms of domain architecture, SSB spans 1–101 (MTNRLVLSGT…LHAEQIELID (101 aa)).

It belongs to the PriB family. In terms of assembly, homodimer. Interacts with PriA and DnaT. Component of the replication restart primosome. Primosome assembly occurs via a 'hand-off' mechanism. PriA binds to replication forks, subsequently PriB then DnaT bind; DnaT then displaces ssDNA to generate the helicase loading substrate.

Functionally, involved in the restart of stalled replication forks, which reloads the replicative helicase on sites other than the origin of replication; the PriA-PriB pathway is the major replication restart pathway. During primosome assembly it facilitates complex formation between PriA and DnaT on DNA; stabilizes PriA on DNA. Stimulates the DNA unwinding activity of PriA helicase. The sequence is that of Replication restart protein PriB from Escherichia coli (strain ATCC 8739 / DSM 1576 / NBRC 3972 / NCIMB 8545 / WDCM 00012 / Crooks).